A 144-amino-acid chain; its full sequence is Large ribosomal subunit protein uL16 (144 aa).

This sequence belongs to the universal ribosomal protein uL16 family. As to quaternary structure, part of the 50S ribosomal subunit.

Functionally, binds 23S rRNA and is also seen to make contacts with the A and possibly P site tRNAs. The sequence is that of Large ribosomal subunit protein uL16 from Halothermothrix orenii (strain H 168 / OCM 544 / DSM 9562).